An 89-amino-acid polypeptide reads, in one-letter code: Small ribosomal subunit protein uS15 (89 aa).

The disordered stretch occupies residues 1-24 (MSLNAETKAGIVEKYRRDPSDTGS). Positions 11–20 (IVEKYRRDPS) are enriched in basic and acidic residues.

This sequence belongs to the universal ribosomal protein uS15 family. In terms of assembly, part of the 30S ribosomal subunit. Forms a bridge to the 50S subunit in the 70S ribosome, contacting the 23S rRNA.

In terms of biological role, one of the primary rRNA binding proteins, it binds directly to 16S rRNA where it helps nucleate assembly of the platform of the 30S subunit by binding and bridging several RNA helices of the 16S rRNA. Functionally, forms an intersubunit bridge (bridge B4) with the 23S rRNA of the 50S subunit in the ribosome. The polypeptide is Small ribosomal subunit protein uS15 (Thioalkalivibrio sulfidiphilus (strain HL-EbGR7)).